The primary structure comprises 621 residues: Type 2 DNA topoisomerase 6 subunit B (621 aa).

ATP is bound by residues asparagine 48, aspartate 80, 101–102 (SR), 111–118 (GQQGIGIS), and lysine 435.

This sequence belongs to the TOP6B family. In terms of assembly, homodimer. Heterotetramer of two Top6A and two Top6B chains.

It carries out the reaction ATP-dependent breakage, passage and rejoining of double-stranded DNA.. Functionally, relaxes both positive and negative superturns and exhibits a strong decatenase activity. This chain is Type 2 DNA topoisomerase 6 subunit B, found in Methanosarcina mazei (strain ATCC BAA-159 / DSM 3647 / Goe1 / Go1 / JCM 11833 / OCM 88) (Methanosarcina frisia).